Consider the following 357-residue polypeptide: MSEPAFFPLPTPLTLDEVAALSGARLARPGAQDALRLTGVGTLADAGPSELAFLDQSRYLATLGTARAGAIITSEKFAGEVPEAIAVLVSPRPASAFVAVTRQLFPQALRPQPVFGHTGIAPGAFIHPTASLEAGVTVDPGAVIGPGAEVGAGSVICANAVVGAGVRIGRDSTIGAGVSLSHALVGNRVIVHAGARIGQDGFGYQPGPGGHLKVPQIGRVVLQDDVEVGAGSTIDRGALRDTVIGEGTKIDNLVQIAHNVVIGRHCIIVSQTGISGSTTLGDFVMLGGQVGVVGHCTIGDGAQIAASSNVKGDVPPGVRWGGSPAKPVREWFREMTTLKKLAESRARSGAATPGEEE.

The active-site Proton acceptor is the His258.

Belongs to the transferase hexapeptide repeat family. LpxD subfamily. Homotrimer.

The enzyme catalyses a UDP-3-O-[(3R)-3-hydroxyacyl]-alpha-D-glucosamine + a (3R)-hydroxyacyl-[ACP] = a UDP-2-N,3-O-bis[(3R)-3-hydroxyacyl]-alpha-D-glucosamine + holo-[ACP] + H(+). It functions in the pathway bacterial outer membrane biogenesis; LPS lipid A biosynthesis. Catalyzes the N-acylation of UDP-3-O-acylglucosamine using 3-hydroxyacyl-ACP as the acyl donor. Is involved in the biosynthesis of lipid A, a phosphorylated glycolipid that anchors the lipopolysaccharide to the outer membrane of the cell. The chain is UDP-3-O-acylglucosamine N-acyltransferase from Azorhizobium caulinodans (strain ATCC 43989 / DSM 5975 / JCM 20966 / LMG 6465 / NBRC 14845 / NCIMB 13405 / ORS 571).